The primary structure comprises 316 residues: HTH-type transcriptional regulator PecT (316 aa).

Residues 11 to 68 (LDLDLLRTFVAVADLNTFAAAAVAVCRTQSAVSQQMQRLEQLIGKELFARHGRNKLLT) enclose the HTH lysR-type domain. A DNA-binding region (H-T-H motif) is located at residues 28-47 (FAAAAVAVCRTQSAVSQQMQ). The segment at 293-316 (LPVSTGTESELREPPTDESLKDIT) is disordered. Residues 301-316 (SELREPPTDESLKDIT) are compositionally biased toward basic and acidic residues.

It belongs to the LysR transcriptional regulatory family.

Functionally, regulates pectinase gene expression. The sequence is that of HTH-type transcriptional regulator PecT (pecT) from Dickeya dadantii (strain 3937) (Erwinia chrysanthemi (strain 3937)).